We begin with the raw amino-acid sequence, 90 residues long: UPF0512 protein L (90 aa).

The protein belongs to the UPF0512 family.

In Dictyostelium discoideum (Social amoeba), this protein is UPF0512 protein L.